Reading from the N-terminus, the 328-residue chain is Dihydroorotate dehydrogenase (quinone), mitochondrial (328 aa).

A helical membrane pass occupies residues 21–38 (AHGLSIAGLKTGLVTGSA). FMN is bound by residues 61–65 (AGYDK) and Thr85. Lys65 contacts substrate. 110-114 (NRLGF) contributes to the substrate binding site. Positions 139 and 170 each coordinate FMN. 170 to 175 (NISSPN) lines the substrate pocket. Ser173 functions as the Nucleophile in the catalytic mechanism. Lys215 and Ser243 together coordinate FMN. 244–245 (NT) is a binding site for substrate. FMN is bound by residues Gly266 and Gly295.

This sequence belongs to the dihydroorotate dehydrogenase family. Type 2 subfamily. FMN serves as cofactor.

Its subcellular location is the mitochondrion inner membrane. The catalysed reaction is (S)-dihydroorotate + a quinone = orotate + a quinol. The protein operates within pyrimidine metabolism; UMP biosynthesis via de novo pathway; orotate from (S)-dihydroorotate (quinone route): step 1/1. Its function is as follows. Catalyzes the conversion of dihydroorotate to orotate with quinone as electron acceptor. This Cyclocybe aegerita (Black poplar mushroom) protein is Dihydroorotate dehydrogenase (quinone), mitochondrial (URA1).